The sequence spans 561 residues: Centromere protein T (561 aa).

The tract at residues 1–78 is disordered; sequence MADHNPDGDP…IGRSAHVQAR (78 aa). Basic and acidic residues predominate over residues 18 to 27; that stretch reads RVLDTADPRT. The segment covering 45–57 has biased composition (polar residues); sequence TASSRRLSGQTKT. The residue at position 47 (serine 47) is a Phosphoserine. Threonine 85 carries the phosphothreonine modification. The segment at 93-421 is flexible stalk domain; that stretch reads ILLTAPESSI…RHHQFPEPAP (329 aa). Disordered regions lie at residues 114–134, 256–293, and 314–457; these read APQV…ELQL, HSLP…GKPA, and SSGV…DPHK. The span at 276 to 289 shows a compositional bias: polar residues; that stretch reads RTQSSGPGLQNNSP. The segment covering 329 to 341 has biased composition (basic and acidic residues); the sequence is GVEEAEKKMKEEG. Phosphoserine is present on residues serine 343, serine 345, serine 356, serine 373, serine 385, serine 386, and serine 397. Residues 365–376 are compositionally biased toward polar residues; that stretch reads TQVTEAEGSQGT. Over residues 439 to 450 the composition is skewed to low complexity; the sequence is RCPPRSRTTGPR.

Belongs to the CENP-T/CNN1 family. In terms of assembly, component of the CENPA-CAD complex, composed of CENPI, CENPK, CENPL, CENPO, CENPP, CENPQ, CENPR and CENPS. The CENPA-CAD complex is probably recruited on centromeres by the CENPA-NAC complex, at least composed of CENPA, CENPC, CENPH, CENPM, CENPN, CENPT and CENPU. Identified in a centromeric complex containing histones H2A, H2B, H3 and H4, and at least CENPA, CENPB, CENPC, CENPT, CENPN, HJURP, SUPT16H, SSRP1 and RSF1. Interacts (via N-terminus) with the NDC80 complex. Heterodimer with CENPW; this dimer coassembles with CENPS-CENPX heterodimers at centromeres to form the tetrameric CENP-T-W-S-X complex. In terms of processing, dynamically phosphorylated during the cell cycle. Phosphorylated during G2 phase, metaphase and anaphase, but not during telophase or G1 phase.

It localises to the nucleus. Its subcellular location is the chromosome. The protein resides in the centromere. The protein localises to the kinetochore. Functionally, component of the CENPA-NAC (nucleosome-associated) complex, a complex that plays a central role in assembly of kinetochore proteins, mitotic progression and chromosome segregation. The CENPA-NAC complex recruits the CENPA-CAD (nucleosome distal) complex and may be involved in incorporation of newly synthesized CENPA into centromeres. Part of a nucleosome-associated complex that binds specifically to histone H3-containing nucleosomes at the centromere, as opposed to nucleosomes containing CENPA. Component of the heterotetrameric CENP-T-W-S-X complex that binds and supercoils DNA, and plays an important role in kinetochore assembly. CENPT has a fundamental role in kinetochore assembly and function. It is one of the inner kinetochore proteins, with most further proteins binding downstream. Required for normal chromosome organization and normal progress through mitosis. This is Centromere protein T (CENPT) from Macaca fascicularis (Crab-eating macaque).